Reading from the N-terminus, the 323-residue chain is tRNA U34 carboxymethyltransferase (323 aa).

Carboxy-S-adenosyl-L-methionine-binding positions include Lys91, Trp105, Lys110, Gly130, 152 to 154, 181 to 182, Met196, Tyr200, and Arg315; these read DPT and IE.

The protein belongs to the class I-like SAM-binding methyltransferase superfamily. CmoB family. As to quaternary structure, homotetramer.

It catalyses the reaction carboxy-S-adenosyl-L-methionine + 5-hydroxyuridine(34) in tRNA = 5-carboxymethoxyuridine(34) in tRNA + S-adenosyl-L-homocysteine + H(+). Functionally, catalyzes carboxymethyl transfer from carboxy-S-adenosyl-L-methionine (Cx-SAM) to 5-hydroxyuridine (ho5U) to form 5-carboxymethoxyuridine (cmo5U) at position 34 in tRNAs. The sequence is that of tRNA U34 carboxymethyltransferase from Shigella dysenteriae serotype 1 (strain Sd197).